A 96-amino-acid polypeptide reads, in one-letter code: Putative antiholin (96 aa).

Over 1 to 4 (MIEM) the chain is Periplasmic. Cytoplasmic segments follow at residues 1–32 (MIEM…KKTE) and 26–29 (QAIK). A helical membrane pass occupies residues 5–25 (EFGKELLVYMTFLVVVTPVFV). A helical transmembrane segment spans residues 33–55 (LVPSKWLPTVSILIGAILGALAT). Residues 56–60 (FLDGS) lie on the Periplasmic side of the membrane. Residues 61-81 (GSLATMIWAGALAGAGGTGLF) form a helical membrane-spanning segment. At 82-96 (EQFTNRSKKYGEDDK) the chain is on the cytoplasmic side.

As to quaternary structure, homomultimer. Interacts with isoform Antiholin; this interaction blocks the holin homomultimerization and delays host cell lysis.

The protein resides in the host cell inner membrane. Its function is as follows. Accumulates harmlessly in the cytoplasmic membrane until it reaches a critical concentration that triggers the formation of micron-scale pores (holes) causing host cell membrane disruption and endolysin escape into the periplasmic space. Determines the precise timing of host cell lysis. Participates with the endolysin and spanin proteins in the sequential events which lead to the programmed host cell lysis releasing the mature viral particles from the host cell. In terms of biological role, isoform Antiholin: Counteracts the aggregation of the holin molecules and thus of pore formation. The sequence is that of Putative antiholin (hol) from Listeria monocytogenes (Bacteriophage A118).